We begin with the raw amino-acid sequence, 276 residues long: Bis(5'-nucleosyl)-tetraphosphatase, symmetrical (276 aa).

Belongs to the Ap4A hydrolase family.

It carries out the reaction P(1),P(4)-bis(5'-adenosyl) tetraphosphate + H2O = 2 ADP + 2 H(+). Functionally, hydrolyzes diadenosine 5',5'''-P1,P4-tetraphosphate to yield ADP. In Legionella pneumophila (strain Lens), this protein is Bis(5'-nucleosyl)-tetraphosphatase, symmetrical.